Consider the following 93-residue polypeptide: Antitoxin EndoAI (93 aa).

Belongs to the MazE/EndoAI family. Homodimer, forms a heterohexamer composed of alternating toxin and antitoxin homodimers which inhibits the toxin's endoribonuclease activity. Antitoxin prevents RNA binding to the endoribonuclease.

In terms of biological role, antitoxin component of a type II toxin-antitoxin (TA) system. Antitoxin that directly inhibits activity of EndoA in vitro. Upon expression in E.coli counteracts inhibitory effect of endoribonuclease EndoA. The EndoA-EndoAI complex does not seem to bind its own promoter. This is Antitoxin EndoAI from Bacillus subtilis (strain 168).